The primary structure comprises 513 residues: Protein indeterminate-domain 11 (513 aa).

The segment at 1-84 (MMNKDMLLHQ…QPGNPDPESE (84 aa)) is disordered. Residues 10-45 (QHQQPQQDENMSNLTSASGDQASVSSGNITEASGSN) are compositionally biased toward polar residues. A compositionally biased stretch (low complexity) spans 51–60 (QQQQEQQQQQ). Ser-89 is modified (phosphoserine). 2 consecutive C2H2-type zinc fingers follow at residues 99-121 (FVCE…RRGH) and 141-171 (YVCP…CRKH). A Nuclear localization signal motif is present at residues 163–170 (IKKHFCRK). Residues 176-199 (WKCDKCSKKYAVQSDCKAHSKTCG) form a C2H2-type 2; degenerate zinc finger. Residues Cys-178, Cys-181, His-194, Cys-198, Cys-205, Cys-207, His-220, and Cys-224 each contribute to the Zn(2+) site. Residues 203-226 (YRCDCGTLFSRRDSFITHRAFCEA) form a CCHC-type 2; atypical zinc finger. Positions 213 to 225 (RRDSFITHRAFCE) are SHR-binding. Disordered regions lie at residues 255 to 280 (ASHP…SHNH) and 334 to 358 (PQPH…SLFS). Over residues 264–280 (TQPTINVSSSSSSSHNH) the composition is skewed to low complexity.

It localises to the nucleus. Functionally, probable transcription factor. This Arabidopsis thaliana (Mouse-ear cress) protein is Protein indeterminate-domain 11.